A 270-amino-acid polypeptide reads, in one-letter code: Insulin-like growth factor-binding protein-like 1 (270 aa).

Positions 1-17 (MPRLPLLLLLLPSLARG) are cleaved as a signal peptide. In terms of domain architecture, IGFBP N-terminal spans 26–101 (RHPECSPCQQ…PEGTGLCVCA (76 aa)). Cystine bridges form between cysteine 30-cysteine 55, cysteine 33-cysteine 57, cysteine 38-cysteine 58, cysteine 44-cysteine 61, cysteine 69-cysteine 83, cysteine 77-cysteine 98, and cysteine 107-cysteine 143. Positions 87–145 (ASGTAPEGTGLCVCAQRGAVCGSDGRSYSSICALRLRARHAPRAHHGHLHKARDGPCEF) constitute a Kazal-like domain. An Ig-like C2-type domain is found at 147–251 (PVVLMPPRDI…GEAQSHGTVT (105 aa)). N-linked (GlcNAc...) asparagine glycosylation is present at asparagine 158. Residues cysteine 168 and cysteine 235 are joined by a disulfide bond.

It is found in the secreted. In terms of biological role, IGF-binding proteins prolong the half-life of IGFs and have been shown to either inhibit or stimulate the growth promoting effects of the IGFs in cell culture. They alter the interaction of IGFs with their cell surface receptors. The sequence is that of Insulin-like growth factor-binding protein-like 1 (Igfbpl1) from Mus musculus (Mouse).